A 142-amino-acid chain; its full sequence is Ribosome maturation factor RimP (142 aa).

The protein belongs to the RimP family.

The protein resides in the cytoplasm. Required for maturation of 30S ribosomal subunits. The chain is Ribosome maturation factor RimP from Aromatoleum aromaticum (strain DSM 19018 / LMG 30748 / EbN1) (Azoarcus sp. (strain EbN1)).